The sequence spans 289 residues: Phenylalanine-4-hydroxylase (289 aa).

Fe cation contacts are provided by His-144, His-149, and Glu-189.

The protein belongs to the biopterin-dependent aromatic amino acid hydroxylase family. It depends on Fe(2+) as a cofactor.

The enzyme catalyses (6R)-L-erythro-5,6,7,8-tetrahydrobiopterin + L-phenylalanine + O2 = (4aS,6R)-4a-hydroxy-L-erythro-5,6,7,8-tetrahydrobiopterin + L-tyrosine. It functions in the pathway amino-acid degradation; L-phenylalanine degradation; acetoacetate and fumarate from L-phenylalanine: step 1/6. The polypeptide is Phenylalanine-4-hydroxylase (phhA) (Vibrio cholerae serotype O1 (strain ATCC 39315 / El Tor Inaba N16961)).